A 1235-amino-acid polypeptide reads, in one-letter code: ATP-dependent DNA helicase mph1 (1235 aa).

Disordered stretches follow at residues 20–78 (LTQA…YRIH) and 96–148 (DEMP…VHSP). Residues 61–72 (SRSDNDEADEKK) are compositionally biased toward basic and acidic residues. Residues 137–148 (AKTQKQNIVHSP) show a composition bias toward polar residues. The 169-residue stretch at 272–440 (IVHKGLFNNL…EVIDNLEIAE (169 aa)) folds into the Helicase ATP-binding domain. 285 to 292 (LPTGLGKT) contributes to the ATP binding site. The short motif at 388 to 391 (DEAH) is the DEAH box element. One can recognise a Helicase C-terminal domain in the interval 608-784 (KLTYLCDTVL…GSRFTFRHDL (177 aa)). 3 disordered regions span residues 808 to 827 (NTQD…RKKL), 944 to 1117 (SRLQ…PPLM), and 1144 to 1235 (TGAK…DSDE). The span at 947–958 (QRPEDRDNKPYG) shows a compositional bias: basic and acidic residues. A compositionally biased stretch (basic residues) spans 1015 to 1027 (VAPKKAKPRRGRA). The segment covering 1065–1074 (PGERVDRTSD) has biased composition (basic and acidic residues). A compositionally biased stretch (acidic residues) spans 1075–1085 (MEELEADDDSD). Polar residues-rich tracts occupy residues 1095 to 1114 (PTQT…SSSP) and 1146 to 1159 (AKNS…MTQE). Over residues 1160–1170 (SSDGGDSMDSD) the composition is skewed to low complexity. Positions 1194–1209 (PSSSVFSSGQKATPNM) are enriched in polar residues.

It belongs to the DEAD box helicase family. DEAH subfamily. FANCM sub-subfamily. Interacts with the MHF histone-fold complex to form the FANCM-MHF complex.

Its subcellular location is the nucleus. It catalyses the reaction ATP + H2O = ADP + phosphate + H(+). ATP-dependent DNA helicase involved in DNA damage repair by homologous recombination and in genome maintenance. Capable of unwinding D-loops. Plays a role in limiting crossover recombinants during mitotic DNA double-strand break (DSB) repair. Component of a FANCM-MHF complex which promotes gene conversion at blocked replication forks, probably by reversal of the stalled fork. This Sclerotinia sclerotiorum (strain ATCC 18683 / 1980 / Ss-1) (White mold) protein is ATP-dependent DNA helicase mph1.